Consider the following 344-residue polypeptide: L-rhamnose-proton symporter (344 aa).

10 consecutive transmembrane segments (helical) span residues 4 to 24, 38 to 58, 68 to 88, 101 to 121, 137 to 157, 175 to 195, 207 to 227, 259 to 279, 290 to 310, and 321 to 341; these read AIIL…CFYA, WSIG…YLLL, FSIA…IGNI, MGIG…TPIL, TLLG…AGLL, LILA…MDAA, INSL…GAII, ILFS…YAWG, MSWM…GLLL, and VAVL…VGLG.

It belongs to the L-rhamnose transporter (TC 2.A.7.6) family.

It localises to the cell inner membrane. The catalysed reaction is L-rhamnopyranose(in) + H(+)(in) = L-rhamnopyranose(out) + H(+)(out). Its function is as follows. Uptake of L-rhamnose across the cytoplasmic membrane with the concomitant transport of protons into the cell (symport system). The protein is L-rhamnose-proton symporter of Yersinia pseudotuberculosis serotype O:1b (strain IP 31758).